A 338-amino-acid polypeptide reads, in one-letter code: 1-aminocyclopropane-1-carboxylate deaminase (338 aa).

K51 carries the N6-(pyridoxal phosphate)lysine modification. Residue S78 is the Nucleophile of the active site.

Belongs to the ACC deaminase/D-cysteine desulfhydrase family. As to quaternary structure, homotrimer. The cofactor is pyridoxal 5'-phosphate.

It catalyses the reaction 1-aminocyclopropane-1-carboxylate + H2O = 2-oxobutanoate + NH4(+). Its function is as follows. Catalyzes a cyclopropane ring-opening reaction, the irreversible conversion of 1-aminocyclopropane-1-carboxylate (ACC) to ammonia and alpha-ketobutyrate. Allows growth on ACC as a nitrogen source. The sequence is that of 1-aminocyclopropane-1-carboxylate deaminase from Pseudomonas putida (Arthrobacter siderocapsulatus).